A 326-amino-acid chain; its full sequence is MATLVELPDSVLLEIFSYLPVRDRIRISRVCHRWKRLVDDRWLWRHVDLTLYTMRPKVMWHLLRRYMASRLHSLRMGGYLFSGSQAPQLSPALLRALGQKCPNLKRLCLHVADLSMVPITSLPSTLRTLELHSCEISMAWLHKQQDPTVLPLLECIVLDRVPAFRDEHLQGLTRFRALRSLVLGGTYRVTETGLDAGLQELSYLQRLEVLGCTLSADSTLLAISRHLRDVRKIRLTVRGLSAPGLAVLEGMPALESLCLQGPLVTPEMPSPTEILSSCLTMPKLRVLELQGLGWEGQEAEKILCKGLPHCMVIVRACPKESMDWWM.

The F-box domain occupies 1–47 (MATLVELPDSVLLEIFSYLPVRDRIRISRVCHRWKRLVDDRWLWRHV). 8 LRR repeats span residues 51 to 78 (LYTM…RMGG), 86 to 111 (APQL…CLHV), 113 to 133 (DLSM…ELHS), 161 to 185 (VPAF…VLGG), 186 to 211 (TYRV…EVLG), 212 to 236 (CTLS…IRLT), 237 to 261 (VRGL…CLQG), and 266 to 291 (PEMP…ELQG).

Interacts with SKP1 and CUL1.

It participates in protein modification; protein ubiquitination. In terms of biological role, substrate-recognition component of the SCF (SKP1-CUL1-F-box protein)-type E3 ubiquitin ligase complex. Mediates the polyubiquitination and proteasomal degradation of CAMK1 leading to disruption of cyclin D1/CDK4 complex assembly which results in G1 cell cycle arrest in lung epithelia. The chain is F-box/LRR-repeat protein 12 (FBXL12) from Homo sapiens (Human).